A 265-amino-acid polypeptide reads, in one-letter code: 4-hydroxy-tetrahydrodipicolinate reductase (265 aa).

Residues Gly7–Met12, Asp33, Gly96–Thr98, and Ala120–Met123 each bind NAD(+). Residue His153 is the Proton donor/acceptor of the active site. His154 serves as a coordination point for (S)-2,3,4,5-tetrahydrodipicolinate. Residue Lys157 is the Proton donor of the active site. Position 163-164 (Gly163–Thr164) interacts with (S)-2,3,4,5-tetrahydrodipicolinate.

This sequence belongs to the DapB family.

It localises to the cytoplasm. It catalyses the reaction (S)-2,3,4,5-tetrahydrodipicolinate + NAD(+) + H2O = (2S,4S)-4-hydroxy-2,3,4,5-tetrahydrodipicolinate + NADH + H(+). It carries out the reaction (S)-2,3,4,5-tetrahydrodipicolinate + NADP(+) + H2O = (2S,4S)-4-hydroxy-2,3,4,5-tetrahydrodipicolinate + NADPH + H(+). It functions in the pathway amino-acid biosynthesis; L-lysine biosynthesis via DAP pathway; (S)-tetrahydrodipicolinate from L-aspartate: step 4/4. Its function is as follows. Catalyzes the conversion of 4-hydroxy-tetrahydrodipicolinate (HTPA) to tetrahydrodipicolinate. This is 4-hydroxy-tetrahydrodipicolinate reductase from Cupriavidus pinatubonensis (strain JMP 134 / LMG 1197) (Cupriavidus necator (strain JMP 134)).